A 265-amino-acid polypeptide reads, in one-letter code: Ubiquinone biosynthesis protein COQ4 homolog, mitochondrial (265 aa).

The Zn(2+) site is built by H162, D163, H166, and E178.

The protein belongs to the COQ4 family. In terms of assembly, component of a multi-subunit COQ enzyme complex. Zn(2+) serves as cofactor.

The protein localises to the mitochondrion inner membrane. It catalyses the reaction a 4-hydroxy-3-methoxy-5-(all-trans-polyprenyl)benzoate + H(+) = a 2-methoxy-6-(all-trans-polyprenyl)phenol + CO2. It participates in cofactor biosynthesis; ubiquinone biosynthesis. Functionally, lyase that catalyzes the C1-decarboxylation of 4-hydroxy-3-methoxy-5-(all-trans-polyprenyl)benzoic acid into 2-methoxy-6-(all-trans-polyprenyl)phenol during ubiquinone biosynthesis. The protein is Ubiquinone biosynthesis protein COQ4 homolog, mitochondrial of Drosophila willistoni (Fruit fly).